The chain runs to 213 residues: Pyridoxine/pyridoxamine 5'-phosphate oxidase (213 aa).

Residues 60–65 (RMVLMK), 75–76 (YS), K82, and Q104 contribute to the FMN site. Substrate is bound at residue K65. The substrate site is built by Y122 and R126. Residues 139–140 (QS) and W184 contribute to the FMN site. Position 190-192 (190-192 (RLH)) interacts with substrate. FMN is bound at residue R194.

This sequence belongs to the pyridoxamine 5'-phosphate oxidase family. As to quaternary structure, homodimer. FMN is required as a cofactor.

It carries out the reaction pyridoxamine 5'-phosphate + O2 + H2O = pyridoxal 5'-phosphate + H2O2 + NH4(+). The catalysed reaction is pyridoxine 5'-phosphate + O2 = pyridoxal 5'-phosphate + H2O2. It functions in the pathway cofactor metabolism; pyridoxal 5'-phosphate salvage; pyridoxal 5'-phosphate from pyridoxamine 5'-phosphate: step 1/1. The protein operates within cofactor metabolism; pyridoxal 5'-phosphate salvage; pyridoxal 5'-phosphate from pyridoxine 5'-phosphate: step 1/1. In terms of biological role, catalyzes the oxidation of either pyridoxine 5'-phosphate (PNP) or pyridoxamine 5'-phosphate (PMP) into pyridoxal 5'-phosphate (PLP). The protein is Pyridoxine/pyridoxamine 5'-phosphate oxidase of Nitrobacter hamburgensis (strain DSM 10229 / NCIMB 13809 / X14).